The sequence spans 347 residues: GTP 3',8-cyclase (347 aa).

The region spanning 10–242 (RLNRPIGVLR…ERINARWPLE (233 aa)) is the Radical SAM core domain. Position 19 (arginine 19) interacts with GTP. The [4Fe-4S] cluster site is built by cysteine 26 and cysteine 30. Tyrosine 32 contacts S-adenosyl-L-methionine. Residue cysteine 33 participates in [4Fe-4S] cluster binding. Arginine 65 lines the GTP pocket. S-adenosyl-L-methionine is bound at residue glycine 69. Threonine 104 serves as a coordination point for GTP. Position 129 (serine 129) interacts with S-adenosyl-L-methionine. Lysine 178 contacts GTP. Methionine 212 contacts S-adenosyl-L-methionine. Residues cysteine 275 and cysteine 278 each coordinate [4Fe-4S] cluster. Position 280–282 (280–282 (RLR)) interacts with GTP. Cysteine 292 provides a ligand contact to [4Fe-4S] cluster.

This sequence belongs to the radical SAM superfamily. MoaA family. As to quaternary structure, monomer and homodimer. [4Fe-4S] cluster serves as cofactor.

It carries out the reaction GTP + AH2 + S-adenosyl-L-methionine = (8S)-3',8-cyclo-7,8-dihydroguanosine 5'-triphosphate + 5'-deoxyadenosine + L-methionine + A + H(+). Its pathway is cofactor biosynthesis; molybdopterin biosynthesis. Functionally, catalyzes the cyclization of GTP to (8S)-3',8-cyclo-7,8-dihydroguanosine 5'-triphosphate. The protein is GTP 3',8-cyclase of Synechococcus sp. (strain CC9605).